The chain runs to 178 residues: Large ribosomal subunit protein uL6 (178 aa).

This sequence belongs to the universal ribosomal protein uL6 family. As to quaternary structure, part of the 50S ribosomal subunit.

In terms of biological role, this protein binds to the 23S rRNA, and is important in its secondary structure. It is located near the subunit interface in the base of the L7/L12 stalk, and near the tRNA binding site of the peptidyltransferase center. This is Large ribosomal subunit protein uL6 from Francisella tularensis subsp. novicida (strain U112).